The sequence spans 749 residues: Protein lin-54 homolog (749 aa).

A Glycyl lysine isopeptide (Lys-Gly) (interchain with G-Cter in SUMO2) cross-link involves residue lysine 139. N6-acetyllysine is present on residues lysine 244 and lysine 249. Serine 264, serine 282, serine 310, and serine 314 each carry phosphoserine. Lysine 357 participates in a covalent cross-link: Glycyl lysine isopeptide (Lys-Gly) (interchain with G-Cter in SUMO2). In terms of domain architecture, CRC spans 521 to 634 (PRKPCNCTKS…KCIGCKNFEE (114 aa)). Positions 523–536 (KPCNCTKSLCLKLY) are DNA-binding. Residues cysteine 525, cysteine 527, cysteine 532, cysteine 537, cysteine 539, cysteine 546, cysteine 549, cysteine 551, and cysteine 554 each contribute to the Zn(2+) site. Residues 583 to 596 (IGKGKEGESDRRHS) are linker. Zn(2+) contacts are provided by cysteine 599, cysteine 601, cysteine 606, cysteine 611, cysteine 613, cysteine 620, cysteine 624, cysteine 626, and cysteine 629. The interval 599–612 (CNCKRSGCLKNYCE) is DNA-binding. Serine 635 is subject to Phosphoserine. Residues lysine 639, lysine 659, and lysine 661 each participate in a glycyl lysine isopeptide (Lys-Gly) (interchain with G-Cter in SUMO2) cross-link.

This sequence belongs to the lin-54 family. As to quaternary structure, component of the DREAM complex (also named LINC complex) at least composed of E2F4, E2F5, LIN9, LIN37, LIN52, LIN54, MYBL1, MYBL2, RBL1, RBL2, RBBP4, RBL2, TFDP1 and TFDP2. The complex exists in quiescent cells where it represses cell cycle-dependent genes. It dissociates in S phase when LIN9, LIN37, LIN52 and LIN54 form a subcomplex that binds to MYBL2.

The protein resides in the nucleus. Its function is as follows. Component of the DREAM complex, a multiprotein complex that can both act as a transcription activator or repressor depending on the context. In G0 phase, the complex binds to more than 800 promoters and is required for repression of E2F target genes. In S phase, the complex selectively binds to the promoters of G2/M genes whose products are required for mitosis and participates in their cell cycle dependent activation. In the complex, acts as a DNA-binding protein that binds the promoter of CDK1 in a sequence-specific manner. Specifically recognizes the consensus motif 5'-TTYRAA-3' in target DNA. In Rattus norvegicus (Rat), this protein is Protein lin-54 homolog (Lin54).